Consider the following 300-residue polypeptide: 4-hydroxy-tetrahydrodipicolinate synthase (300 aa).

Thr56 is a pyruvate binding site. Tyr145 functions as the Proton donor/acceptor in the catalytic mechanism. The active-site Schiff-base intermediate with substrate is the Lys173. A pyruvate-binding site is contributed by Val215.

Belongs to the DapA family. In terms of assembly, homotetramer; dimer of dimers.

It is found in the cytoplasm. It carries out the reaction L-aspartate 4-semialdehyde + pyruvate = (2S,4S)-4-hydroxy-2,3,4,5-tetrahydrodipicolinate + H2O + H(+). It participates in amino-acid biosynthesis; L-lysine biosynthesis via DAP pathway; (S)-tetrahydrodipicolinate from L-aspartate: step 3/4. Its function is as follows. Catalyzes the condensation of (S)-aspartate-beta-semialdehyde [(S)-ASA] and pyruvate to 4-hydroxy-tetrahydrodipicolinate (HTPA). The sequence is that of 4-hydroxy-tetrahydrodipicolinate synthase from Prochlorococcus marinus (strain MIT 9301).